The chain runs to 940 residues: DNA gyrase subunit A (940 aa).

The tract at residues 1–22 (MSDHTNPPSAPPDDDPNGGSLL) is disordered. Residues 48–538 (LPDARDGLKP…SLADQDDESL (491 aa)) form the Topo IIA-type catalytic domain. The active-site O-(5'-phospho-DNA)-tyrosine intermediate is Tyr136. A GyrA-box motif is present at residues 565-571 (QHRGGRG). Acidic residues predominate over residues 914–924 (ESVDDNGDDAD). The disordered stretch occupies residues 914-940 (ESVDDNGDDADSVAPAAPDGQVTDSDD).

It belongs to the type II topoisomerase GyrA/ParC subunit family. As to quaternary structure, heterotetramer, composed of two GyrA and two GyrB chains. In the heterotetramer, GyrA contains the active site tyrosine that forms a transient covalent intermediate with DNA, while GyrB binds cofactors and catalyzes ATP hydrolysis.

Its subcellular location is the cytoplasm. The enzyme catalyses ATP-dependent breakage, passage and rejoining of double-stranded DNA.. In terms of biological role, a type II topoisomerase that negatively supercoils closed circular double-stranded (ds) DNA in an ATP-dependent manner to modulate DNA topology and maintain chromosomes in an underwound state. Negative supercoiling favors strand separation, and DNA replication, transcription, recombination and repair, all of which involve strand separation. Also able to catalyze the interconversion of other topological isomers of dsDNA rings, including catenanes and knotted rings. Type II topoisomerases break and join 2 DNA strands simultaneously in an ATP-dependent manner. The polypeptide is DNA gyrase subunit A (Granulibacter bethesdensis (strain ATCC BAA-1260 / CGDNIH1)).